The sequence spans 140 residues: 6,7-dimethyl-8-ribityllumazine synthase (140 aa).

5-amino-6-(D-ribitylamino)uracil is bound by residues Phe11, 42-44 (ALE), and 66-68 (VVI). Position 71–72 (71–72 (ET)) interacts with (2S)-2-hydroxy-3-oxobutyl phosphate. The Proton donor role is filled by His74. Residue Asn98 coordinates 5-amino-6-(D-ribitylamino)uracil. Residue Arg112 participates in (2S)-2-hydroxy-3-oxobutyl phosphate binding.

Belongs to the DMRL synthase family.

It catalyses the reaction (2S)-2-hydroxy-3-oxobutyl phosphate + 5-amino-6-(D-ribitylamino)uracil = 6,7-dimethyl-8-(1-D-ribityl)lumazine + phosphate + 2 H2O + H(+). The protein operates within cofactor biosynthesis; riboflavin biosynthesis; riboflavin from 2-hydroxy-3-oxobutyl phosphate and 5-amino-6-(D-ribitylamino)uracil: step 1/2. Its function is as follows. Catalyzes the formation of 6,7-dimethyl-8-ribityllumazine by condensation of 5-amino-6-(D-ribitylamino)uracil with 3,4-dihydroxy-2-butanone 4-phosphate. This is the penultimate step in the biosynthesis of riboflavin. The chain is 6,7-dimethyl-8-ribityllumazine synthase from Erythrobacter litoralis (strain HTCC2594).